The primary structure comprises 1744 residues: Myotubularin-related protein 5 (1744 aa).

The 137-residue stretch at 14–150 (DTVAVIVLEE…IRFLTYELVE (137 aa)) folds into the uDENN domain. A cDENN domain is found at 165-304 (ELGFELIPIS…YYNSLHQRLR (140 aa)). One can recognise a dDENN domain in the interval 306-412 (VMFTTTSQED…LTRALPRRKH (107 aa)). Positions 787–871 (KGNFDPVLAH…LYSMESFKKL (85 aa)) constitute a GRAM domain. In terms of domain architecture, Myotubularin phosphatase spans 996 to 1447 (NAHIRYAVID…PQIHMWPFLA (452 aa)). The span at 1102-1116 (TGSMTGSQQTLHSKA) shows a compositional bias: polar residues. A disordered region spans residues 1102 to 1123 (TGSMTGSQQTLHSKASSNEESS). Residues 1540–1590 (IHELTPFTVGARPVQCCYCTNILTRWSKAVHCKKCRIHVHEGCVNRNITIG) form a Phorbol-ester/DAG-type zinc finger. One can recognise a PH domain in the interval 1643–1743 (PPLCTGYLSK…WKECIEQVIR (101 aa)).

It belongs to the protein-tyrosine phosphatase family. Non-receptor class myotubularin subfamily.

Its function is as follows. Probably acts as an adapter for other myotubularin-like phosphatases. The chain is Myotubularin-related protein 5 from Caenorhabditis elegans.